The following is a 348-amino-acid chain: DNA-directed RNA polymerase subunit alpha (348 aa).

The interval 1 to 243 is alpha N-terminal domain (alpha-NTD); the sequence is MLIKQGDRLI…DQISVFINFD (243 aa). Residues 260-348 form an alpha C-terminal domain (alpha-CTD) region; the sequence is VNENLFKGID…WLKRKQQNEA (89 aa).

This sequence belongs to the RNA polymerase alpha chain family. In terms of assembly, homodimer. The RNAP catalytic core consists of 2 alpha, 1 beta, 1 beta' and 1 omega subunit. When a sigma factor is associated with the core the holoenzyme is formed, which can initiate transcription.

It catalyses the reaction RNA(n) + a ribonucleoside 5'-triphosphate = RNA(n+1) + diphosphate. DNA-dependent RNA polymerase catalyzes the transcription of DNA into RNA using the four ribonucleoside triphosphates as substrates. The protein is DNA-directed RNA polymerase subunit alpha of Oleidesulfovibrio alaskensis (strain ATCC BAA-1058 / DSM 17464 / G20) (Desulfovibrio alaskensis).